A 555-amino-acid chain; its full sequence is Membrane protein insertase YidC (555 aa).

Residues 7–24 (ILWVIFSMSLVLLYDNWQ) form a helical membrane-spanning segment. The interval 61-81 (TAGAAAPAAPGGAPQAAAQPT) is disordered. The next 5 membrane-spanning stretches (helical) occupy residues 341–361 (GWLT…HGFL), 364–384 (WGWS…PLSA), 430–450 (LGGC…YWVL), 468–488 (LSVP…MFVQ), and 503–523 (VMMI…AGLV).

Belongs to the OXA1/ALB3/YidC family. Type 1 subfamily. In terms of assembly, interacts with the Sec translocase complex via SecD. Specifically interacts with transmembrane segments of nascent integral membrane proteins during membrane integration.

The protein resides in the cell inner membrane. In terms of biological role, required for the insertion and/or proper folding and/or complex formation of integral membrane proteins into the membrane. Involved in integration of membrane proteins that insert both dependently and independently of the Sec translocase complex, as well as at least some lipoproteins. Aids folding of multispanning membrane proteins. This chain is Membrane protein insertase YidC, found in Cupriavidus pinatubonensis (strain JMP 134 / LMG 1197) (Cupriavidus necator (strain JMP 134)).